Consider the following 1414-residue polypeptide: DNA-directed RNA polymerase subunit beta' (1414 aa).

Positions 72, 74, 87, and 90 each coordinate Zn(2+). Mg(2+) contacts are provided by aspartate 463, aspartate 465, and aspartate 467. The Zn(2+) site is built by cysteine 811, cysteine 885, cysteine 892, and cysteine 895.

It belongs to the RNA polymerase beta' chain family. In terms of assembly, the RNAP catalytic core consists of 2 alpha, 1 beta, 1 beta' and 1 omega subunit. When a sigma factor is associated with the core the holoenzyme is formed, which can initiate transcription. Mg(2+) serves as cofactor. Zn(2+) is required as a cofactor.

It carries out the reaction RNA(n) + a ribonucleoside 5'-triphosphate = RNA(n+1) + diphosphate. Its function is as follows. DNA-dependent RNA polymerase catalyzes the transcription of DNA into RNA using the four ribonucleoside triphosphates as substrates. The chain is DNA-directed RNA polymerase subunit beta' from Roseobacter denitrificans (strain ATCC 33942 / OCh 114) (Erythrobacter sp. (strain OCh 114)).